A 238-amino-acid polypeptide reads, in one-letter code: tRNA1(Val) (adenine(37)-N6)-methyltransferase (238 aa).

It belongs to the methyltransferase superfamily. tRNA (adenine-N(6)-)-methyltransferase family.

Its subcellular location is the cytoplasm. The catalysed reaction is adenosine(37) in tRNA1(Val) + S-adenosyl-L-methionine = N(6)-methyladenosine(37) in tRNA1(Val) + S-adenosyl-L-homocysteine + H(+). In terms of biological role, specifically methylates the adenine in position 37 of tRNA(1)(Val) (anticodon cmo5UAC). This Cytophaga hutchinsonii (strain ATCC 33406 / DSM 1761 / CIP 103989 / NBRC 15051 / NCIMB 9469 / D465) protein is tRNA1(Val) (adenine(37)-N6)-methyltransferase.